Consider the following 35-residue polypeptide: Tamulustoxin-2 (35 aa).

3 disulfide bridges follow: Cys-2–Cys-22, Cys-7–Cys-31, and Cys-11–Cys-33.

This sequence belongs to the short scorpion toxin superfamily. Potassium channel inhibitor family. As to expression, expressed by the venom gland.

It localises to the secreted. Functionally, blocks Kv1.6/KCNA6 potassium channels. The sequence is that of Tamulustoxin-2 from Hottentotta tamulus (Eastern Indian scorpion).